Consider the following 299-residue polypeptide: Protein FAM228A (299 aa).

The disordered stretch occupies residues 135 to 201 (AKGTSYQHGR…GRNRYKGASS (67 aa)). A compositionally biased stretch (basic and acidic residues) spans 146–159 (KTHDTQKEAKETEK). Ser264 is modified (phosphoserine).

This sequence belongs to the FAM228 family.

The polypeptide is Protein FAM228A (Fam228a) (Mus musculus (Mouse)).